The sequence spans 409 residues: ATPase ASNA1 homolog (409 aa).

Residue 21–28 (KGGVGKTT) coordinates ATP. Residue aspartate 62 is part of the active site. Residues glutamate 303 and asparagine 330 each contribute to the ATP site. Zn(2+) is bound by residues cysteine 342 and cysteine 345.

This sequence belongs to the arsA ATPase family. As to quaternary structure, homodimer.

It is found in the cytoplasm. The protein localises to the endoplasmic reticulum. In terms of biological role, ATPase required for the post-translational delivery of tail-anchored (TA) proteins to the endoplasmic reticulum. Recognizes and selectively binds the transmembrane domain of TA proteins in the cytosol. This complex then targets to the endoplasmic reticulum by membrane-bound receptors, where the tail-anchored protein is released for insertion. This process is regulated by ATP binding and hydrolysis. ATP binding drives the homodimer towards the closed dimer state, facilitating recognition of newly synthesized TA membrane proteins. ATP hydrolysis is required for insertion. Subsequently, the homodimer reverts towards the open dimer state, lowering its affinity for the membrane-bound receptor, and returning it to the cytosol to initiate a new round of targeting. This Leishmania infantum protein is ATPase ASNA1 homolog.